The following is a 204-amino-acid chain: Inactive ribonuclease-like protein 9 (204 aa).

An N-terminal signal peptide occupies residues 1–26; it reads MMRTLITIHPLPLLLLLQQLLQPVQF. 3 cysteine pairs are disulfide-bonded: Cys97–Cys152, Cys115–Cys167, and Cys122–Cys129. N-linked (GlcNAc...) asparagine glycans are attached at residues Asn130 and Asn142.

It belongs to the pancreatic ribonuclease family.

The protein localises to the secreted. Its function is as follows. Does not exhibit any ribonuclease activity. The sequence is that of Inactive ribonuclease-like protein 9 (RNASE9) from Pongo pygmaeus (Bornean orangutan).